Here is a 423-residue protein sequence, read N- to C-terminus: Zinc transporter ZIP13 (423 aa).

The Lumenal segment spans residues 1-15; the sequence is MPGCPCPGIGMAGQR. A helical transmembrane segment spans residues 16 to 36; sequence LLFLAALALELLGGAGGSQQA. Residues 37-68 lie on the Cytoplasmic side of the membrane; sequence LRSRGVAAACRLDSKESESWGALLSGERLETW. Residues 69-89 traverse the membrane as a helical segment; that stretch reads ICSLLGSLMVGLSGVFPLLVI. Residues 90–108 are Lumenal-facing; sequence PLEMGTTLRSEAGARRLKQ. A helical transmembrane segment spans residues 109–129; the sequence is LLSFALGGLLGNVFLHLLPEA. Residues 130 to 149 lie on the Cytoplasmic side of the membrane; that stretch reads WAYTNSASSGGERQSLQQQQ. Residues 150–170 traverse the membrane as a helical segment; it reads QLGLWVIAGFLTFLVLEKLFF. Over 171 to 235 the chain is Lumenal; it reads DSKGKEETSQ…TIDNFTHGLA (65 aa). The helical transmembrane segment at 236-256 threads the bilayer; that stretch reads VAASFLVSKKIGLLTTMAILL. Residues 257–262 carry the XEXPHE-motif motif; it reads HEIPHE. Residues 257 to 278 lie on the Cytoplasmic side of the membrane; it reads HEIPHEVGDFAILLRAGFDRWS. The chain crosses the membrane as a helical span at residues 279–299; sequence AAKLQLSTALGGLLGACFAIC. Residues 300-368 are Lumenal-facing; it reads AQSPKGVGTG…RAPPPATEET (69 aa). The chain crosses the membrane as a helical span at residues 369–389; it reads VAWILPFTSGGFLYIALVNVL. Residues 390–401 are Cytoplasmic-facing; that stretch reads PDLLEEDDPWRS. Residues 402–422 form a helical membrane-spanning segment; the sequence is LQQVLLLCAGIVVMVLFSVFV. Glu423 is a topological domain (lumenal).

The protein belongs to the ZIP transporter (TC 2.A.5) family. In terms of assembly, homodimer.

It is found in the golgi apparatus membrane. The protein resides in the cytoplasmic vesicle membrane. The protein localises to the endoplasmic reticulum membrane. It catalyses the reaction Zn(2+)(in) = Zn(2+)(out). Its function is as follows. Functions as a zinc transporter transporting Zn(2+) from the Golgi apparatus to the cytosol and thus influences the zinc level at least in areas of the cytosol. May regulate beige adipocyte differentiation. The protein is Zinc transporter ZIP13 of Bos taurus (Bovine).